Reading from the N-terminus, the 140-residue chain is Nucleoside diphosphate kinase (140 aa).

Lys10, Phe58, Arg86, Thr92, Arg103, and Asn113 together coordinate ATP. His116 acts as the Pros-phosphohistidine intermediate in catalysis.

Belongs to the NDK family. Homotetramer. Requires Mg(2+) as cofactor.

It localises to the cytoplasm. It carries out the reaction a 2'-deoxyribonucleoside 5'-diphosphate + ATP = a 2'-deoxyribonucleoside 5'-triphosphate + ADP. The catalysed reaction is a ribonucleoside 5'-diphosphate + ATP = a ribonucleoside 5'-triphosphate + ADP. Functionally, major role in the synthesis of nucleoside triphosphates other than ATP. The ATP gamma phosphate is transferred to the NDP beta phosphate via a ping-pong mechanism, using a phosphorylated active-site intermediate. The polypeptide is Nucleoside diphosphate kinase (Haemophilus influenzae (strain PittEE)).